The primary structure comprises 46 residues: Toxin Up-1 (46 aa).

Its subcellular location is the secreted. The protein resides in the nematocyst. It is found in the target cell membrane. Its function is as follows. This toxin is a potent hemolysin devoid of enzymatic activity. Its hemolytic activity is inhibited by sphingomyelin but not by cholesterol. In erythrocyte membranes, it causes numerous cell membrane ruptures. It also exerces cytotoxicity to different cell lines. It exerces a positive inotropic effect. Also causes hemorrhage and necrosis by dilation of the blood vessels in the skin, and vascular leakage of fluids and rupture of alveolar walls of the lungs. Is a potent ichtyotoxin. May act as a pore-forming toxin. The chain is Toxin Up-1 from Urticina piscivora (Fish-eating sea anemone).